A 351-amino-acid polypeptide reads, in one-letter code: UDP-N-acetylenolpyruvoylglucosamine reductase (351 aa).

The 172-residue stretch at 25–196 (HIQAQARWLL…TAVEFRLPLL (172 aa)) folds into the FAD-binding PCMH-type domain. Residue R173 is part of the active site. Catalysis depends on S246, which acts as the Proton donor. The active site involves E343.

Belongs to the MurB family. It depends on FAD as a cofactor.

The protein localises to the cytoplasm. The enzyme catalyses UDP-N-acetyl-alpha-D-muramate + NADP(+) = UDP-N-acetyl-3-O-(1-carboxyvinyl)-alpha-D-glucosamine + NADPH + H(+). Its pathway is cell wall biogenesis; peptidoglycan biosynthesis. In terms of biological role, cell wall formation. The sequence is that of UDP-N-acetylenolpyruvoylglucosamine reductase from Xylella fastidiosa (strain M23).